A 718-amino-acid polypeptide reads, in one-letter code: Gephyrin (718 aa).

Polar residues predominate over residues Met-1 to Gln-19. The segment at Met-1 to Gly-26 is disordered. Residues Glu-31–Glu-176 form an MPT Mo-transferase region. The span at Asn-222–Ser-244 shows a compositional bias: low complexity. Disordered stretches follow at residues Asn-222–Asn-266 and Thr-344–Asp-364. Residues His-245 to Ser-254 show a composition bias toward basic residues. Residues Lys-260–Asn-718 form an MPT adenylyltransferase region.

This sequence in the N-terminal section; belongs to the MoaB/Mog family. In the C-terminal section; belongs to the MoeA family. Homotrimer, homodimer and homooligomer. Mg(2+) serves as cofactor.

The protein localises to the cell membrane. Its subcellular location is the cytoplasm. It is found in the cytosol. The protein resides in the cytoskeleton. It catalyses the reaction molybdopterin + ATP + H(+) = adenylyl-molybdopterin + diphosphate. The catalysed reaction is adenylyl-molybdopterin + molybdate = Mo-molybdopterin + AMP + H(+). The protein operates within cofactor biosynthesis; molybdopterin biosynthesis. In terms of biological role, microtubule-associated protein involved in membrane protein-cytoskeleton interactions. Functionally, also has a catalytic activity and catalyzes two steps in the biosynthesis of the molybdenum cofactor. In the first step, molybdopterin is adenylated. Subsequently, molybdate is inserted into adenylated molybdopterin and AMP is released. The sequence is that of Gephyrin (gphn) from Dictyostelium discoideum (Social amoeba).